The primary structure comprises 209 residues: NADH-ubiquinone oxidoreductase subunit 9 (209 aa).

The protein belongs to the complex I 30 kDa subunit family. In terms of assembly, complex I is composed of about 30 different subunits.

The protein localises to the mitochondrion inner membrane. The enzyme catalyses a ubiquinone + NADH + 5 H(+)(in) = a ubiquinol + NAD(+) + 4 H(+)(out). Functionally, core subunit of the mitochondrial membrane respiratory chain NADH dehydrogenase (Complex I) that is believed to belong to the minimal assembly required for catalysis. Complex I functions in the transfer of electrons from NADH to the respiratory chain. The immediate electron acceptor for the enzyme is believed to be ubiquinone. The sequence is that of NADH-ubiquinone oxidoreductase subunit 9 (NAD9) from Paramecium primaurelia.